Here is a 467-residue protein sequence, read N- to C-terminus: FK506-binding protein 4 (467 aa).

Disordered stretches follow at residues 64 to 163 and 208 to 357; these read KATG…GDDD and GNFV…KPTS. Composition is skewed to acidic residues over residues 71–80, 147–163, and 213–254; these read DDDDEEEDEY, SDEEESDEESDCCGDDD, and PEDD…DELD. Basic and acidic residues-rich tracts occupy residues 271-287 and 312-332; these read APKLVDTSKKGKKRPAE and QKVEEAKKEEPKKETKSDKKV. Positions 381–467 constitute a PPIase FKBP-type domain; it reads GDRVGMRYIG…IFDVKLLEIK (87 aa).

This sequence belongs to the FKBP-type PPIase family. FKBP3/4 subfamily. In terms of assembly, binds to histones H3 and H4.

Its subcellular location is the nucleus. The enzyme catalyses [protein]-peptidylproline (omega=180) = [protein]-peptidylproline (omega=0). Its activity is regulated as follows. Inhibited by both FK506 and rapamycin. In terms of biological role, PPIase that acts as a histone chaperone. Histone proline isomerase that increases the rate of cis-trans isomerization at prolines on the histone H3 N-terminal tail. Proline isomerization influences H3 methylation thereby regulating gene expression. The chain is FK506-binding protein 4 (fkr-4) from Neurospora crassa (strain ATCC 24698 / 74-OR23-1A / CBS 708.71 / DSM 1257 / FGSC 987).